Reading from the N-terminus, the 70-residue chain is Small ribosomal subunit protein bS21B (70 aa).

It belongs to the bacterial ribosomal protein bS21 family.

This chain is Small ribosomal subunit protein bS21B, found in Rhizobium etli (strain ATCC 51251 / DSM 11541 / JCM 21823 / NBRC 15573 / CFN 42).